Consider the following 355-residue polypeptide: Glutamine synthetase root isozyme 4 (355 aa).

The region spanning 19-99 (IIAEYIWIGG…VMCDCYTPAG (81 aa)) is the GS beta-grasp domain. Residues 37 to 66 (ARTLPGPVTDPSKLPKWNYDGSSTGQAPGE) are disordered. The GS catalytic domain maps to 106-355 (KRYSAAKIFS…IAETTIVWKP (250 aa)).

It belongs to the glutamine synthetase family. As to quaternary structure, homooctamer. Found in all the tissues examined with higher expression found in tissues of the root, stem and seedling shoot.

It is found in the cytoplasm. The catalysed reaction is L-glutamate + NH4(+) + ATP = L-glutamine + ADP + phosphate + H(+). Functionally, plays a role in the flow of nitrogen into nitrogenous organic compounds. The chain is Glutamine synthetase root isozyme 4 (GLN5) from Zea mays (Maize).